Consider the following 234-residue polypeptide: BTB/POZ domain-containing protein KCTD5 (234 aa).

Ala-2 bears the N-acetylalanine mark. Residues 44–146 (KWVRLNVGGT…LVKDKIRERD (103 aa)) form the BTB domain. Positions 211 to 234 (NSPHGPASEPSEKAKILQERGSRM) are disordered. Residues 220-234 (PSEKAKILQERGSRM) show a composition bias toward basic and acidic residues.

As to quaternary structure, homopentamer. Interacts (via C-terminus) with GRASP55/GORASP2. Interacts with CUL3 and with ubiquitinated proteins. Interacts with CRY1.

The protein resides in the cytoplasm. It is found in the cytosol. It localises to the nucleus. In terms of biological role, its interaction with CUL3 suggests that it may act as a substrate adapter in some E3 ligase complex. Does not affect the function of Kv channel Kv2.1/KCNB1, Kv1.2/KCNA2, Kv4.2/KCND2 and Kv3.4/KCNC4. This Bos taurus (Bovine) protein is BTB/POZ domain-containing protein KCTD5 (KCTD5).